Consider the following 174-residue polypeptide: MTTVTTSFVSFSPALMIFQKKSRRSSPNFRNRSTSLPIVSATLSHIEEAATTTNLIRQTNSISESLRNISLADLDPGTAKLAIGILGPALSAFGFLFILRIVMSWYPKLPVDKFPYVLAYAPTEPILVQTRKVIPPLAGVDVTPVVWFGLVSFLSEILVGPQGLLVLVSQQQVN.

The N-terminal 39 residues, 1 to 39, are a transit peptide targeting the chloroplast; the sequence is MTTVTTSFVSFSPALMIFQKKSRRSSPNFRNRSTSLPIV. Residues 40–78 lie on the Lumenal side of the membrane; it reads SATLSHIEEAATTTNLIRQTNSISESLRNISLADLDPGT. Residues 79–99 form a helical membrane-spanning segment; it reads AKLAIGILGPALSAFGFLFIL. At 100–147 the chain is on the stromal side; sequence RIVMSWYPKLPVDKFPYVLAYAPTEPILVQTRKVIPPLAGVDVTPVVW. Residues 148 to 168 traverse the membrane as a helical segment; the sequence is FGLVSFLSEILVGPQGLLVLV. At 169–174 the chain is on the lumenal side; it reads SQQQVN.

This sequence belongs to the YggT family.

Its subcellular location is the plastid. It is found in the chloroplast thylakoid membrane. In terms of biological role, required for the biogenesis and accumulation of native cytochrome b6 in the thylakoid membrane. Controls the conversion of apocytochrome b6 to holocytochrome b6. Required for covalent binding of the c-type heme to cytochrome b6. The sequence is that of Protein COFACTOR ASSEMBLY OF COMPLEX C SUBUNIT B CCB3, chloroplastic from Arabidopsis thaliana (Mouse-ear cress).